The primary structure comprises 234 residues: Phosphoribosylaminoimidazole-succinocarboxamide synthase (234 aa).

It belongs to the SAICAR synthetase family.

It catalyses the reaction 5-amino-1-(5-phospho-D-ribosyl)imidazole-4-carboxylate + L-aspartate + ATP = (2S)-2-[5-amino-1-(5-phospho-beta-D-ribosyl)imidazole-4-carboxamido]succinate + ADP + phosphate + 2 H(+). Its pathway is purine metabolism; IMP biosynthesis via de novo pathway; 5-amino-1-(5-phospho-D-ribosyl)imidazole-4-carboxamide from 5-amino-1-(5-phospho-D-ribosyl)imidazole-4-carboxylate: step 1/2. The polypeptide is Phosphoribosylaminoimidazole-succinocarboxamide synthase (purC) (Pyrococcus abyssi (strain GE5 / Orsay)).